Consider the following 211-residue polypeptide: Large ribosomal subunit protein uL4 (211 aa).

Residues 63–94 (RFGRQKGGGTARHGARSAPQFVGGGKAHGPRV) form a disordered region.

Belongs to the universal ribosomal protein uL4 family. In terms of assembly, part of the 50S ribosomal subunit.

One of the primary rRNA binding proteins, this protein initially binds near the 5'-end of the 23S rRNA. It is important during the early stages of 50S assembly. It makes multiple contacts with different domains of the 23S rRNA in the assembled 50S subunit and ribosome. Functionally, forms part of the polypeptide exit tunnel. This Maricaulis maris (strain MCS10) (Caulobacter maris) protein is Large ribosomal subunit protein uL4.